Consider the following 1914-residue polypeptide: MTPSPFLDAVDAGLSRLYACFGGQGPSNWAGLDELVHLSHAYADCAPIQDLLDSSARRLESLAAIPHRSSFFAGRGFQLQAWLNDAAASAPLPEDLALSPYSFPINTLLSLLHYAITAYSLQLDPGQLRQKLQGAIGHSQGVFVAAAIAISHTDHGWPSFYRAADLALQLSFWVGLESHHASPRSILCANEVIDCLENGEGAPSHLLSVTGLDINHLERLVRKLNDQGGDSLYISLINGHNKFVLAGAPHALRGVCIALRSVKASPELDQSRVPFPLRRSVVDVQFLPVSAPYHSSLLSSVELRVTDAIGGLRLRGNDLAIPVYCQANGSLRNLQDYGTHDILLTLIQSVTVERVNWPALCWAMNDATHVLSFGPGAVGSLVQDVLEGTGMNVVNLSGQSMASNLSLLNLSAFALPLGKDWGRKYRPRLRKAAEGSAHASIETKMTRLLGTPHVMVAGMTPTTCSPELVAAIIQADYHVEFACGGYYNRATLETALRQLSRSIPPHRSITCNVIYASPKALSWQIQVLRRLIMEEGLPIDGITVGAGIPSPEVVKEWIDMLAISHIWFKPGSVDAIDRVLTIARQYPTLPVGIQWTGGRAGGHHSCEDFHLPILDCYARIRNCENVILVAGSGFGGAEDTWPYMNGSWSCKLGYAPMPFDGILLGSRMMVAREAKTSFAVKQLIVEAPGVKDDGNDNGAWAKCEHDAVGGVISVTSEMGQPIHVLATRAMRLWKEFDDRFFSIRDPKRLKAALKQHRVEIINRLNNDFARPWFAQTDSSKPTEIEELSYRQVLRRLCQLTYVQHQARWIDSSYLSLVHDFLRLAQGRLGSGSEAELRFLSCNTPIELEASFDAAYGVQGDQILYPEDVSLLINLFRRQGQKPVPFIPRLDADFQTWFKKDSLWQSEDVDAVVDQDAQRVCIIQGPVAVRHSRVCDEPVKDILDGITEAHLKMMLKEAASDNGYTWANQRDEKGNRLPGIETSQEGSLCRYYLVGPTLPSTEAIVEHLVGECAWGYAALSQKKVVFGQNRAPNPIRDAFKPDIGDVIEAKYMDGCLREITLYHSLRRQGDPRAIRAALGLIHLDGNKVSVTLLTRSKGKRPALEFKMELLGGTMGPLILKMHRTDYLDSVRRLYTDLWIGRDLPSPTSVGLNSEFTGDRVTITAEDVNTFLAIVGQAGPARCRAWGTRGPVVPIDYAVVIAWTALTKPILLEALDADPLRLLHQSASTRFVPGIRPLHVGDTVTTSSRITERTITTIGQRVEISAELLREGKPVVRLQTTFIIQRRPEESVSQQQFRCVEEPDMVIRVDSHTKLRVLMSRKWFLLDGPCSDLIGKILIFQLHSQTVFDAAGAPASLQVSGSVSLAPSDTSVVCVSSVGTRIGRVYMEEEGFGANPVMDFLNRHGAPRVQRQPLPRAGWTGDDAASISFTAPAQSEGYAMVSGDTNPIHVCPLFSRFAGLGQPVVHGLHLSATVRRILEWIIGDNERTRFCSWAPSFDGLVRANDRLRMEIQHFAMADGCMVVHVRVLKESTGEQVMHAEAVLEQAQTTYVFTGQGTQERGMGMALYDTNAAARAVWDRAERHFRSQYGISLLHIVRENPTSLTVNFGSRRGRQIRDIYLSMSDSDPSMLPGLTRDSRSYTFNYPSGLLMSTQFAQPALAVMEIAEYAHLQAQGVVQTQAIFAGHSLGEYSSLGACTTIMPFESLLSLILYRGLKMQNTLPRNANGRTDYGMVAADPSRIRSDFTEDRLIELVRLVSQATGVLLEVVNYNVHSRQYVCAGHVRSLWVLSHACDDLSRSTSPNSPQTMSECIAHHIPSSCSVTNETELSRGRATIPLAGVDIPFHSQMLRGHIDGYRQYLRHHLRVSDIKPEELVGRWIPNVTGKPFALDAPYIRLVQGVTQSRPLLELLRRVEENR.

The interval leucine 17–asparagine 395 is acetyltransferase (AT) domain. Residues threonine 446–aspartate 692 form an enoyl reductase (ER) domain region. The tract at residues glycine 1009 to isoleucine 1509 is dehydratase (DH) domain. A MaoC-like domain is found at phenylalanine 1398 to glutamate 1532. Residues tyrosine 1548–serine 1900 are malonyl/palmitoyl transferase (MT/PT) domain.

This sequence belongs to the fungal fatty acid synthetase subunit beta family. [Alpha(6)beta(6)] hexamers of two multifunctional subunits (alpha and beta).

It carries out the reaction acetyl-CoA + n malonyl-CoA + 2n NADPH + 4n H(+) = a long-chain-acyl-CoA + n CoA + n CO2 + 2n NADP(+).. It catalyses the reaction holo-[ACP] + acetyl-CoA = acetyl-[ACP] + CoA. The enzyme catalyses holo-[ACP] + malonyl-CoA = malonyl-[ACP] + CoA. The catalysed reaction is a (3R)-hydroxyacyl-[ACP] = a (2E)-enoyl-[ACP] + H2O. It carries out the reaction a 2,3-saturated acyl-[ACP] + NAD(+) = a (2E)-enoyl-[ACP] + NADH + H(+). It catalyses the reaction (9Z)-octadecenoyl-[ACP] + H2O = (9Z)-octadecenoate + holo-[ACP] + H(+). It participates in mycotoxin biosynthesis; sterigmatocystin biosynthesis. Fatty acid synthase beta subunit; part of the gene cluster that mediates the biosynthesis of sterigmatocystin (ST), a polyketide-derived furanocoumarin which is part of the most toxic and carcinogenic compounds among the known mycotoxins. The first step in the biosynthesis of sterigmatocystin is the production of hexanoate by the fatty acid synthase (FAS) units stcJ and stcK. The polyketide backbone is assembled by the non-reducing polyketide synthase stcA by condensation of the starter hexanoyl-CoA and 7 malonyl-CoA extender units followed by cyclization and release of norsolorinic acid. Norsolorinic acid is the first stable intermediate in the biosynthesis of sterigmatocystin and is converted into averantin (AVN) by the ketoreductase stcE which reduces the hexanoate ketone to an alcohol. Averantin is then oxidized into 5'-hydroxyaverantin (HAVN) by the cytochrome P450 monooxygenase stcF. 5'-hydroxyaverantin is further converted to 5'-oxyaverantin (OAVN) by the 5'-hydroxyaverantin dehydrogenase stcG. The next step is the conversion of OAVN into averufin (AVF) which is catalyzed by a yet to be identified enzyme. The cytochrome P450 monooxygenase stcB and the flavin-binding monooxygenase stcW are both required for the conversion of averufin to 1-hydroxyversicolorone. The esterase stcI probably catalyzes the formation of versiconal hemiacetal acetate from 1-hydroxyversicolorone. The oxydoreductase stcN then probably catalyzes the biosynthetic step from versiconal to versicolorin B (VERB). The next step is performed by the versicolorin B desaturase stcL to produce versicolorin A (VERA). The ketoreductase stcU and the cytochrome P450 monooxygenase stcS are involved in the conversion of versicolorin A to demethylsterigmatocystin. The Baeyer-Villiger oxidas stcQ and the reductase stcR might be involved in the biosynthetic step from versicolorin A to demethylsterigmatocystin. The final step in the biosynthesis of sterigmatocystin is the methylation of demethylsterigmatocystin catalyzed by the methyltransferase stcP. This chain is Fatty acid synthase beta subunit stcK, found in Emericella nidulans (strain FGSC A4 / ATCC 38163 / CBS 112.46 / NRRL 194 / M139) (Aspergillus nidulans).